Reading from the N-terminus, the 429-residue chain is MANVVIVGSQWGDEGKGKIVDLFTEKADYVVRFQGGNNAGHTLVVNGEKHIFHLVPSGILHKGKVCMIGNGVVVDPGVLIREMDRLHEAGIPVTRENLLISRYAHVIMPYHRAMDNARENRKGKTKIGTTGRGIGPCYEDKVARCGVRIHDLSDPKTLGEKIRRNLEEKNFLLERFFGEKPLDAAAMEQEYLAYGERLAPLVDNVSERLQEAVREGRNILFEGAQGTHLDIDHGTYPFVTSSNTVAGNAACGSGIGPTRIDRVLGVVKAYTTRVGGGPFPSELLDETGERMRTRGGEFGATTGRPRRCGWLDMVVVKTAIRLNGLSGLLITKLDVLTGIPKLKIVTSYKCGPRKIEFMPPELEALEACEPVYEEFHGWEEDIGSVRKFTDLPVNTRRYLQALEEMAGVPLMVVSVGPARDETIVLEYPF.

Residues 12–18 (GDEGKGK) and 40–42 (GHT) each bind GTP. The Proton acceptor role is filled by aspartate 13. 2 residues coordinate Mg(2+): aspartate 13 and glycine 40. IMP is bound by residues 13 to 16 (DEGK), 38 to 41 (NAGH), threonine 130, arginine 144, glutamine 225, threonine 240, and arginine 304. Histidine 41 acts as the Proton donor in catalysis. 300–306 (ATTGRPR) is a substrate binding site. GTP-binding positions include arginine 306, 332–334 (KLD), and 414–416 (SVG).

Belongs to the adenylosuccinate synthetase family. In terms of assembly, homodimer. Mg(2+) is required as a cofactor.

The protein resides in the cytoplasm. It catalyses the reaction IMP + L-aspartate + GTP = N(6)-(1,2-dicarboxyethyl)-AMP + GDP + phosphate + 2 H(+). Its pathway is purine metabolism; AMP biosynthesis via de novo pathway; AMP from IMP: step 1/2. Functionally, plays an important role in the de novo pathway of purine nucleotide biosynthesis. Catalyzes the first committed step in the biosynthesis of AMP from IMP. The polypeptide is Adenylosuccinate synthetase (Syntrophobacter fumaroxidans (strain DSM 10017 / MPOB)).